A 352-amino-acid polypeptide reads, in one-letter code: 26S proteasome regulatory subunit rpn-8 (352 aa).

The region spanning 16–152 (VSVAPLVLLS…TDAYFAVDEI (137 aa)) is the MPN domain. The interval 303–352 (NRQQQEENDAKKKEGENGEKKEGADKKEGSPAAANGESKEKENSPKEKKK) is disordered. Basic and acidic residues-rich tracts occupy residues 306-331 (QQEENDAKKKEGENGEKKEGADKKEG) and 339-352 (ESKEKENSPKEKKK).

This sequence belongs to the peptidase M67A family.

Its function is as follows. Acts as a regulatory subunit of the 26S proteasome which is involved in the ATP-dependent degradation of ubiquitinated proteins. This chain is 26S proteasome regulatory subunit rpn-8 (rpn-8), found in Neurospora crassa (strain ATCC 24698 / 74-OR23-1A / CBS 708.71 / DSM 1257 / FGSC 987).